Reading from the N-terminus, the 167-residue chain is RNA pyrophosphohydrolase (167 aa).

One can recognise a Nudix hydrolase domain in the interval 8 to 158 (PYRRNVGAML…KRDIYRTLVR (151 aa)). The Nudix box signature appears at 49-70 (GGIDADEDPEEAVLRELREEIG).

This sequence belongs to the Nudix hydrolase family. RppH subfamily. A divalent metal cation serves as cofactor.

Accelerates the degradation of transcripts by removing pyrophosphate from the 5'-end of triphosphorylated RNA, leading to a more labile monophosphorylated state that can stimulate subsequent ribonuclease cleavage. The polypeptide is RNA pyrophosphohydrolase (Gluconacetobacter diazotrophicus (strain ATCC 49037 / DSM 5601 / CCUG 37298 / CIP 103539 / LMG 7603 / PAl5)).